The sequence spans 405 residues: Acetylornithine/succinyldiaminopimelate aminotransferase (405 aa).

Pyridoxal 5'-phosphate-binding positions include 108–109 (GT) and Phe-141. Arg-144 provides a ligand contact to N(2)-acetyl-L-ornithine. 226-229 (DEVQ) contributes to the pyridoxal 5'-phosphate binding site. The residue at position 255 (Lys-255) is an N6-(pyridoxal phosphate)lysine. Position 283 (Ser-283) interacts with N(2)-acetyl-L-ornithine. Thr-284 is a binding site for pyridoxal 5'-phosphate.

The protein belongs to the class-III pyridoxal-phosphate-dependent aminotransferase family. ArgD subfamily. As to quaternary structure, homodimer. Requires pyridoxal 5'-phosphate as cofactor.

The protein resides in the cytoplasm. It carries out the reaction N(2)-acetyl-L-ornithine + 2-oxoglutarate = N-acetyl-L-glutamate 5-semialdehyde + L-glutamate. The enzyme catalyses N-succinyl-(2S,6S)-2,6-diaminopimelate + 2-oxoglutarate = (S)-2-succinylamino-6-oxoheptanedioate + L-glutamate. It participates in amino-acid biosynthesis; L-arginine biosynthesis; N(2)-acetyl-L-ornithine from L-glutamate: step 4/4. It functions in the pathway amino-acid biosynthesis; L-lysine biosynthesis via DAP pathway; LL-2,6-diaminopimelate from (S)-tetrahydrodipicolinate (succinylase route): step 2/3. Its function is as follows. Involved in both the arginine and lysine biosynthetic pathways. The sequence is that of Acetylornithine/succinyldiaminopimelate aminotransferase from Salmonella typhi.